The primary structure comprises 412 residues: Homoserine dehydrogenase (412 aa).

Residues 9 to 16 (LGIGTVGG) and Lys105 each bind NADP(+). Glu190 contacts substrate. Lys205 functions as the Proton donor in the catalytic mechanism. The region spanning 330–407 (YLRLRAVDKP…ISGKVTRLRM (78 aa)) is the ACT domain.

It belongs to the homoserine dehydrogenase family.

The enzyme catalyses L-homoserine + NADP(+) = L-aspartate 4-semialdehyde + NADPH + H(+). It catalyses the reaction L-homoserine + NAD(+) = L-aspartate 4-semialdehyde + NADH + H(+). It functions in the pathway amino-acid biosynthesis; L-methionine biosynthesis via de novo pathway; L-homoserine from L-aspartate: step 3/3. It participates in amino-acid biosynthesis; L-threonine biosynthesis; L-threonine from L-aspartate: step 3/5. The protein is Homoserine dehydrogenase (hom) of Methylobacillus glycogenes.